The chain runs to 221 residues: Thymidylate kinase (221 aa).

11-18 (GPDGAGKT) is an ATP binding site.

This sequence belongs to the thymidylate kinase family.

It catalyses the reaction dTMP + ATP = dTDP + ADP. Functionally, phosphorylation of dTMP to form dTDP in both de novo and salvage pathways of dTTP synthesis. This Lactiplantibacillus plantarum (strain ATCC BAA-793 / NCIMB 8826 / WCFS1) (Lactobacillus plantarum) protein is Thymidylate kinase.